A 298-amino-acid polypeptide reads, in one-letter code: Protein BZR1 homolog 1 (298 aa).

Disordered stretches follow at residues 1-25, 71-129, 153-175, and 190-217; these read MTSG…RRER, GTTY…SPSR, VSSS…PKIR, and AVSA…ESDV. The tract at residues 10 to 91 is required for DNA-binding; it reads RTPTWKEREN…PSSAGGASVG (82 aa). The segment covering 96–128 has biased composition (low complexity); it reads SSTQLLSAPSSSFPSPVPSYHASPASSSFPSPS. At Ser156 the chain carries Phosphoserine. A PEST-like region spans residues 204 to 224; sequence EHPDTIPECDESDVSTVDSGR.

The protein belongs to the BZR/LAT61 family. In terms of assembly, interacts with GF14C. Interacts with PUB24. Interacts with SMOS1. Phosphorylated on serine and threonine residues by GSK2. Dephosphorylated during response to brassinosteroid. Post-translationally, ubiquitinated by PUB24. Ubiquitination leads to its subsequent degradation by the 26S proteasome, thus reducing sensitivity to brassinosteroid signaling.

Its subcellular location is the nucleus. It localises to the cytoplasm. In terms of biological role, positive brassinosteroid-signaling protein. Mediates downstream brassinosteroid-regulated growth response and feedback inhibition of brassinosteroid (BR) biosynthetic genes. May act as transcriptional repressor by binding the brassinosteroid-response element (BREE) (5'-CGTG(T/C)G-3') in the promoter of DLT (AC Q9LWU9), another positive regulator of BR signaling. Acts as a transcriptional repressor of LIC, a negative regulator of BR signaling, by binding to the BRRE element of its promoter. BZR1 and LIC play opposite roles in BR signaling and regulation of leaf bending. The sequence is that of Protein BZR1 homolog 1 from Oryza sativa subsp. japonica (Rice).